Reading from the N-terminus, the 910-residue chain is Disease resistance protein RPH8A (910 aa).

Residues 15–57 (DLLSRESERLQGIDEQLDGLKRQLRSLQSLLKDADAKKHGSDR) are a coiled coil. Residues 146–459 (RQRVQREIRQ…AEGIYDGSTI (314 aa)) form the NB-ARC domain. Residue 192 to 199 (GMGGIGKT) coordinates ATP.

It belongs to the disease resistance NB-LRR family. RPP8/HRT subfamily.

Its function is as follows. Disease resistance protein. Resistance proteins guard the plant against pathogens that contain an appropriate avirulence protein via an indirect interaction with this avirulence protein. That triggers a defense system including the hypersensitive response, which restricts the pathogen growth. In contrast to RPP8, it does not specifically recognize the Emco5 avirulence protein from Hyaloperonospora parasitica. In Arabidopsis thaliana (Mouse-ear cress), this protein is Disease resistance protein RPH8A (RPH8A).